The primary structure comprises 694 residues: Cyclic nucleotide-gated ion channel 4 (694 aa).

Residues 1–15 (MATEQEFTRASRFSR) show a composition bias toward basic and acidic residues. Residues 1-64 (MATEQEFTRA…RIGLTCGGRR (64 aa)) form a disordered region. Topologically, residues 1–92 (MATEQEFTRA…RSKWVREWNK (92 aa)) are cytoplasmic. Residues 24-53 (SEEDNTEEEDEEEEEMEEIEEEEEEEEEED) show a composition bias toward acidic residues. Residues 93–113 (VFLLVCATGLFVDPLFLYTLS) traverse the membrane as a helical segment. The Extracellular segment spans residues 114–126 (VSDTCMCLLVDGW). The chain crosses the membrane as a helical span at residues 127-147 (LALTVTALRSMTDLLHLWNIW). At 148-187 (IQFKIARRWPYPGGDSDGDTNKGGGTRGSTRVAPPYVKKN) the chain is on the cytoplasmic side. Residues 188 to 208 (GFFFDLFVILPLPQVVLWVVI) traverse the membrane as a helical segment. The Extracellular portion of the chain corresponds to 209-216 (PSLLKRGS). The helical transmembrane segment at 217–237 (VTLVVSVLLVTFLFQYLPKIY) threads the bilayer. The Cytoplasmic portion of the chain corresponds to 238-251 (HSIRHLRRNATLSG). Residues 252–272 (YIFGTVWWGIALNMIAYFVAA) form a helical membrane-spanning segment. Residues 273–392 (HAAGACWYLL…LESTTEWSEV (120 aa)) are Extracellular-facing. The chain crosses the membrane as a helical span at residues 393–413 (VFNIIVLTSGLLLVTMLIGNI). Topologically, residues 414 to 694 (KVFLHATTSK…KPNPDDFDDY (281 aa)) are cytoplasmic. Residues 496–626 (LFQH…ARYY) and aspartate 565 each bind a nucleoside 3',5'-cyclic phosphate. The calmodulin-binding stretch occupies residues 610 to 626 (FRYTFVNEKVKRSARYY). The IQ domain maps to 631–660 (RTWAAVAVQLAWRRYKHRLTLTSLSFIRPR).

Belongs to the cyclic nucleotide-gated cation channel (TC 1.A.1.5) family. Homotetramer or heterotetramer.

It is found in the cell membrane. Acts as a cyclic nucleotide-gated ion channel. Permeable to potassium and sodium in a cyclic nucleotide-dependent fashion (cAMP or cGMP). Might constitute a common downstream component of the signaling pathways leading to hypersensitive response (HR). This is Cyclic nucleotide-gated ion channel 4 (CNGC4) from Arabidopsis thaliana (Mouse-ear cress).